A 336-amino-acid chain; its full sequence is Quinolinate synthase (336 aa).

Residues His-25 and Ser-42 each coordinate iminosuccinate. Cys-86 serves as a coordination point for [4Fe-4S] cluster. Iminosuccinate contacts are provided by residues 117–119 (YIN) and Ser-138. Cys-198 is a binding site for [4Fe-4S] cluster. Residues 224–226 (HPE) and Thr-241 contribute to the iminosuccinate site. Cys-288 is a [4Fe-4S] cluster binding site.

The protein belongs to the quinolinate synthase family. Type 3 subfamily. The cofactor is [4Fe-4S] cluster.

It localises to the cytoplasm. It carries out the reaction iminosuccinate + dihydroxyacetone phosphate = quinolinate + phosphate + 2 H2O + H(+). It participates in cofactor biosynthesis; NAD(+) biosynthesis; quinolinate from iminoaspartate: step 1/1. Functionally, catalyzes the condensation of iminoaspartate with dihydroxyacetone phosphate to form quinolinate. The protein is Quinolinate synthase of Helicobacter pylori (strain HPAG1).